The following is a 419-amino-acid chain: Endothiapepsin (419 aa).

Positions 1 to 20 (MSSPLKNALVTAMLAGGALS) are cleaved as a signal peptide. A propeptide spans 21–89 (SPTKQHVGIP…QNSTSGLAER (69 aa)) (activation peptide). Residues 106–417 (YITPVQIGTP…GATTPTLGFA (312 aa)) form the Peptidase A1 domain. Active-site residues include D124 and S288. Residues C344 and C379 are joined by a disulfide bond.

This sequence belongs to the peptidase A1 family.

It carries out the reaction Hydrolysis of proteins with specificity similar to that of pepsin A, prefers hydrophobic residues at P1 and P1', but does not cleave 14-Ala-|-Leu-15 in the B chain of insulin or Z-Glu-Tyr. Clots milk.. In Cryphonectria parasitica (Chestnut blight fungus), this protein is Endothiapepsin (EAPA).